The following is a 205-amino-acid chain: Large ribosomal subunit protein uL4 (205 aa).

The segment at 65–99 (RQKGTGGARHGSRKSPTFRHGGVYKGPTPRSHGHD) is disordered.

This sequence belongs to the universal ribosomal protein uL4 family. Part of the 50S ribosomal subunit.

Functionally, one of the primary rRNA binding proteins, this protein initially binds near the 5'-end of the 23S rRNA. It is important during the early stages of 50S assembly. It makes multiple contacts with different domains of the 23S rRNA in the assembled 50S subunit and ribosome. Forms part of the polypeptide exit tunnel. In Ruegeria pomeroyi (strain ATCC 700808 / DSM 15171 / DSS-3) (Silicibacter pomeroyi), this protein is Large ribosomal subunit protein uL4.